The following is a 427-amino-acid chain: Ceramide Synthase FUM18 (427 aa).

An N-linked (GlcNAc...) asparagine glycan is attached at N20. Helical transmembrane passes span 38–58 (ILPL…IHIS), 131–151 (EQGW…LIWA), 173–193 (GLIK…VISV), 202–222 (YWLN…CYVY), 250–270 (YLGF…TWIV), and 335–355 (VSIL…FGFI). One can recognise a TLC domain in the interval 124-364 (RKVVRFSEQG…ICKVAIGVLD (241 aa)). Residues 373–406 (SDVESDEEDSEPVANGSGWQQSQLQPGRRVGSNG) are disordered. An N-linked (GlcNAc...) asparagine glycan is attached at N387.

The protein belongs to the sphingosine N-acyltransferase family.

The protein localises to the endoplasmic reticulum membrane. It participates in mycotoxin biosynthesis. In terms of biological role, ceramide synthase; part of the gene cluster that mediates the biosynthesis of fumonisins B1 (FB1), B2 (FB2), B3 (FB3), and B4 (FB4), which are carcinogenic mycotoxins. Plays a role in self-protection from FB1 toxicity by contributing to ceramide synthesis. The biosynthesis starts with the FUM1-catalyzed carbon chain assembly from one molecule of acetyl-CoA, eight molecules of malonyl-CoA, and two molecules of methionine (in S-adenosyl form). The C18 polyketide chain is released from the enzyme by a nucleophilic attack of a carbanion, which is derived from R-carbon of alanine by decarboxylation, on the carbonyl carbon of polyketide acyl chain. This step is catalyzed by the pyridoxal 5'-phosphate-dependent aminoacyl transferase FUM8. The resultant 3-keto intermediate is then stereospecifically reduced to a 3-hydroxyl product by reductase FUM13. Subsequent oxidations at C-10 by the cytochrome P450 monooxygenase FUM2, C-14 and C-15 by FUM6, FUM12 or FUM15, tricarballylic esterification of the hydroxyl groups on C-14 and C-15 by acyltransferase FUM14, and C-5 hydroxylation by 2-keto-glutarate-dependent dioxygenase FUM3 furnish the biosynthesis of fumonisins. The tricarballylic moieties are most likely derived from the citric acid cycle, and their addition to the carbon backbone may involve FUM7, FUM10, FUM11 and FUM14. The sequence is that of Ceramide Synthase FUM18 from Gibberella moniliformis (strain M3125 / FGSC 7600) (Maize ear and stalk rot fungus).